The primary structure comprises 70 residues: MDNLENRVEELEMKIAFQDGTIEELNTQVIKLNNLLASQQDQLRILLSKLHAVEPSNMASQSEETPPPHY.

Belongs to the SlyX family.

This Shewanella pealeana (strain ATCC 700345 / ANG-SQ1) protein is Protein SlyX homolog.